The following is a 364-amino-acid chain: Putative transport protein BUsg_115 (364 aa).

Helical transmembrane passes span 18 to 38 (IFII…ILGF), 40 to 60 (WASM…KFLG), 65 to 85 (VAVI…IVFL), 161 to 181 (GLFI…YWNG), 215 to 235 (ALGV…GLLI), 243 to 263 (LLMI…PILI), 280 to 300 (LLLI…PFFI), 309 to 329 (FLIL…GLFI), and 331 to 351 (PVVL…ISIA).

It belongs to the autoinducer-2 exporter (AI-2E) (TC 2.A.86) family.

The protein resides in the cell membrane. The chain is Putative transport protein BUsg_115 from Buchnera aphidicola subsp. Schizaphis graminum (strain Sg).